Here is a 79-residue protein sequence, read N- to C-terminus: Small cysteine-rich protein 2 (79 aa).

A signal peptide spans 1–21 (MRSQHVLILLLGLVCASQVLG). Positions 22-35 (KHLTKVKAKALHYD) are excised as a propeptide.

The protein belongs to the Cnidaria small cysteine-rich protein (SCRiP) family. delta subfamily. Post-translationally, contains 4 disulfide bonds.

Its subcellular location is the secreted. It localises to the nematocyst. This recombinant protein induces severe neurotoxicity on zebrafish larvae (Danio rerio) at a concentration of 230 mg/ml, but does not show toxicity when injected in blowfly larvae (Sarcophaga falculata). All fish incubated with this protein died within 200 minutes of exposure. Has also been claimed to be implied in calcification, but this function seems improbable. The sequence is that of Small cysteine-rich protein 2 from Acropora millepora (Staghorn coral).